The chain runs to 271 residues: 4-hydroxy-tetrahydrodipicolinate reductase (271 aa).

Residues 10 to 15 (GAGGRM), Glu36, 100 to 102 (GTT), and 124 to 127 (SGNM) contribute to the NAD(+) site. The active-site Proton donor/acceptor is His157. A (S)-2,3,4,5-tetrahydrodipicolinate-binding site is contributed by His158. Residue Lys161 is the Proton donor of the active site. 167 to 168 (GT) is a binding site for (S)-2,3,4,5-tetrahydrodipicolinate.

The protein belongs to the DapB family.

It localises to the cytoplasm. The enzyme catalyses (S)-2,3,4,5-tetrahydrodipicolinate + NAD(+) + H2O = (2S,4S)-4-hydroxy-2,3,4,5-tetrahydrodipicolinate + NADH + H(+). The catalysed reaction is (S)-2,3,4,5-tetrahydrodipicolinate + NADP(+) + H2O = (2S,4S)-4-hydroxy-2,3,4,5-tetrahydrodipicolinate + NADPH + H(+). Its pathway is amino-acid biosynthesis; L-lysine biosynthesis via DAP pathway; (S)-tetrahydrodipicolinate from L-aspartate: step 4/4. In terms of biological role, catalyzes the conversion of 4-hydroxy-tetrahydrodipicolinate (HTPA) to tetrahydrodipicolinate. The sequence is that of 4-hydroxy-tetrahydrodipicolinate reductase from Rhodopseudomonas palustris (strain HaA2).